Reading from the N-terminus, the 320-residue chain is MSLLRIRKPKTRKGKKVLLAREPQLIESARTMLFLDGRKCGGNVKLCMKDLQALKKPLVKVLNRKNDITPFDDPSSLEFLTMKNDAALFTFGSTSKKRPDNIILGRIFENEVLDMFELGIKRYQAISEFKNEKIGACVKPCLVFNGPKWAQTEELRRLRNLFIDTFQREKVDSIRLQGIEHVLSFTVTDDMNILMRSYRILLKKSGQRTPRIELEEIGPSADFSIRRTKIASEDLYKQARKQPKQLKVGKKKNISTDALGNTKGRVHLGKQQTGSIQTRRVKALRKTPEEKKENRQRKKVALKAAAAEALASQGNNPFSS.

A Brix domain is found at 30–234; the sequence is RTMLFLDGRK…IRRTKIASED (205 aa). The disordered stretch occupies residues 268 to 320; sequence LGKQQTGSIQTRRVKALRKTPEEKKENRQRKKVALKAAAAEALASQGNNPFSS. Low complexity predominate over residues 302–311; sequence LKAAAAEALA.

This sequence belongs to the RPF2 family.

It localises to the nucleus. Its subcellular location is the nucleolus. Required for normal assembly of the mitotic spindle. May be involved in both centrosome-dependent and centrosome-independent spindle assembly programs. This is Ribosome production factor 2 homolog from Drosophila melanogaster (Fruit fly).